Here is a 146-residue protein sequence, read N- to C-terminus: MKLHELKPAEGSRKSRKRIGRGTGSGLGRNAGKGEKGQKARAGGGVRIGFEGGQMPLYRRVPKRGFTNIFAKQYSELNVERLNIFEDGTEITPELLIEKRMIRKSKDGLKILGNGELQKKLTVKAVKFTKAAAQKIEAAGGKVEVI.

Over residues 1-13 (MKLHELKPAEGSR) the composition is skewed to basic and acidic residues. The tract at residues 1 to 47 (MKLHELKPAEGSRKSRKRIGRGTGSGLGRNAGKGEKGQKARAGGGVR) is disordered. Residues 21–31 (RGTGSGLGRNA) show a composition bias toward gly residues.

Belongs to the universal ribosomal protein uL15 family. As to quaternary structure, part of the 50S ribosomal subunit.

Functionally, binds to the 23S rRNA. The protein is Large ribosomal subunit protein uL15 of Clostridium kluyveri (strain NBRC 12016).